Here is a 1771-residue protein sequence, read N- to C-terminus: Gag-Pro-Pol polyprotein (1771 aa).

Gly2 carries the N-myristoyl glycine; by host lipid modification. The propeptide occupies 101–161; sequence AAVAQTEEIL…TKKPKRFPVL (61 aa). 2 stretches are compositionally biased toward polar residues: residues 113–125 and 140–152; these read NSQT…SQNP and KSSS…LSST. The disordered stretch occupies residues 113–178; sequence NSQTDLTKTS…DPEDPNPSEV (66 aa). The PPXY motif motif lies at 202–205; it reads PPPY. The PTAP/PSAP motif motif lies at 210 to 213; that stretch reads PSAP. Residues 216–257 adopt a coiled-coil conformation; the sequence is MAVVNPKEELKEKIAQLEEQIKLEELHQALISKLQKLKTGNE. Residues 260 to 279 form a disordered region; sequence THPDTAGGLSRTPHWPGQHI. The PTAP/PSAP motif signature appears at 335 to 338; that stretch reads ATAP. 2 CCHC-type zinc fingers span residues 547–564 and 576–593; these read GCCF…NCHE and GLCP…ECKS. The tract at residues 592 to 626 is disordered; it reads KSKTDNQGNPIPPHQGNRVEGPAPGPETSLWGSQL. In terms of domain architecture, Peptidase A2 spans 780 to 856; that stretch reads FTGLIDTGAD…LPVNLWGRDL (77 aa). The Protease; shared with dimeric partner role is filled by Asp785. Residues 867–913 form the G-patch domain; the sequence is PNDIVTAQMLAQGYSPGKGLGKKENGILHPIPNQGQSNKKGFGNFLT. The Reverse transcriptase domain occupies 959-1147; the sequence is LEAGHITESS…DPYTYLGFEL (189 aa). Mg(2+)-binding residues include Asp1024, Asp1099, Asp1100, Asp1370, Glu1399, Asp1420, and Asp1484. The RNase H type-1 domain occupies 1361–1492; sequence LNNALLVFTD…ADLATKIVAS (132 aa). An Integrase-type zinc finger spans residues 1496–1537; sequence TNLESAQNAHTLHHLNAQTLRLMFNIPREQARQIVKQCPICV. Positions 1505, 1509, 1533, and 1536 each coordinate Zn(2+). Positions 1550 to 1719 constitute an Integrase catalytic domain; that stretch reads RGLFPNMIWQ…NPKKQFAMVK (170 aa). 3 residues coordinate Mg(2+): Asp1561, Asp1618, and Glu1654. Residues 1716-1765 constitute a DNA-binding region (integrase-type); the sequence is AMVKWKDPLDNTWHGPDPVLIWGRGSVCVYSQTYDAARWLPERLVRQVSN.

This sequence belongs to the retroviral Pol polyprotein family. As to quaternary structure, homodimer. Interacts with the G-patch peptide. In terms of assembly, interacts with the reverse transcriptase/ribonuclease H. As to quaternary structure, homotrimer. It depends on Mg(2+) as a cofactor. Post-translationally, released by autocatalytic processing. The protease can undergo further autoprocessing to yield 2 shorter but enzymatically active forms of 12 kDa and 13 kDa. In terms of processing, myristoylated. Myristoylation of the matrix (MA) domain mediates the transport and binding of Gag polyproteins to the host plasma membrane and is required for the assembly of viral particles. Specific enzymatic cleavages in vivo yield mature proteins.

The protein localises to the virion. The catalysed reaction is DNA(n) + a 2'-deoxyribonucleoside 5'-triphosphate = DNA(n+1) + diphosphate. It catalyses the reaction Endonucleolytic cleavage to 5'-phosphomonoester.. The enzyme catalyses dUTP + H2O = dUMP + diphosphate + H(+). Matrix protein. In terms of biological role, nucleocapsid protein p14: Nucleocapsid protein. Functionally, capsid protein. Its function is as follows. The aspartyl protease mediates proteolytic cleavages of Gag and Gag-Pol polyproteins during or shortly after the release of the virion from the plasma membrane. Cleavages take place as an ordered, step-wise cascade to yield mature proteins. This process is called maturation. Displays maximal activity during the budding process just prior to particle release from the cell. Enhances the activity of the reverse transcriptase. May be part of the mature RT. In terms of biological role, RT is a multifunctional enzyme that converts the viral dimeric RNA genome into dsDNA in the cytoplasm, shortly after virus entry into the cell. This enzyme displays a DNA polymerase activity that can copy either DNA or RNA templates, and a ribonuclease H (RNase H) activity that cleaves the RNA strand of RNA-DNA heteroduplexes in a partially processive 3' to 5' endonucleasic mode. Conversion of viral genomic RNA into dsDNA requires many steps. A tRNA binds to the primer-binding site (PBS) situated at the 5' end of the viral RNA. RT uses the 3' end of the tRNA primer to perfom a short round of RNA-dependent minus-strand DNA synthesis. The reading proceeds through the U5 region and ends after the repeated (R) region which is present at both ends of viral RNA. The portion of the RNA-DNA heteroduplex is digested by the RNase H, resulting in a ssDNA product attached to the tRNA primer. This ssDNA/tRNA hybridizes with the identical R region situated at the 3' end of viral RNA. This template exchange, known as minus-strand DNA strong stop transfer, can be either intra- or intermolecular. RT uses the 3' end of this newly synthesized short ssDNA to perfom the RNA-dependent minus-strand DNA synthesis of the whole template. RNase H digests the RNA template except for a polypurine tract (PPT) situated at the 5' end of the genome. It is not clear if both polymerase and RNase H activities are simultaneous. RNase H probably can proceed both in a polymerase-dependent (RNA cut into small fragments by the same RT performing DNA synthesis) and a polymerase-independent mode (cleavage of remaining RNA fragments by free RTs). Secondly, RT performs DNA-directed plus-strand DNA synthesis using the PPT that has not been removed by RNase H as primers. PPT and tRNA primers are then removed by RNase H. The 3' and 5' ssDNA PBS regions hybridize to form a circular dsDNA intermediate. Strand displacement synthesis by RT to the PBS and PPT ends produces a blunt ended, linear dsDNA copy of the viral genome that includes long terminal repeats (LTRs) at both ends. Functionally, catalyzes viral DNA integration into the host chromosome, by performing a series of DNA cutting and joining reactions. This is Gag-Pro-Pol polyprotein (gag-pro-pol) from Macaca mulatta (Rhesus macaque).